A 459-amino-acid chain; its full sequence is Periodic tryptophan protein 1 homolog (459 aa).

The disordered stretch occupies residues 44-84; that stretch reads GDTQQELDEESDDDAEEGENAEEDQNDMDVDDHADANSENR. A compositionally biased stretch (acidic residues) spans 48-73; the sequence is QELDEESDDDAEEGENAEEDQNDMDV. Over residues 74-84 the composition is skewed to basic and acidic residues; it reads DDHADANSENR. 5 WD repeats span residues 168-214, 232-272, 275-315, 321-361, and 365-405; these read LLPS…AIEP, GHKD…PHTT, AFGK…GVNS, KVDG…QLLW, and AHNE…AKHV. Ser385 bears the Phosphoserine mark.

This sequence belongs to the WD repeat PWP1 family. As to quaternary structure, interacts with Mybbp1A. Post-translationally, phosphorylated in response to nutrient-activated TORC1 signaling. As to expression, detected in the germline of adult testis and ovary (at protein level). Detected in ovary somatic cells, in zfh1-positive cyst cells in the testis and absent in differentiated cyst cells (at protein level).

Its subcellular location is the nucleus. It localises to the nucleolus. The protein localises to the chromosome. It is found in the nucleoplasm. Chromatin-associated factor that regulates transcription. Regulates Pol I-mediated rRNA biogenesis and, probably, Pol III-mediated transcription. Regulates the localization to the nucleolus of Cdk7, a regulator of the Pol I-elongation factor TFIIH. Acts as a regulator of cell proliferation and tissue growth as part of the TORC1 and Myc signaling pathway in response to nutrients. Required in males for both germline stem cell (GSC) maintenance and early stages of germ cell differentiation of germ cell cysts. Not required for female germline stem cell (GSC) maintenance, but necessary to regulate germ cell differentiation and egg chamber development. In female somatic cells, required for follicle stem cell survival and maintenance. The sequence is that of Periodic tryptophan protein 1 homolog from Drosophila melanogaster (Fruit fly).